We begin with the raw amino-acid sequence, 165 residues long: UPF0763 protein NIS_0363 (165 aa).

It belongs to the UPF0763 family.

The chain is UPF0763 protein NIS_0363 from Nitratiruptor sp. (strain SB155-2).